The sequence spans 405 residues: NADH-quinone oxidoreductase subunit D (405 aa).

Belongs to the complex I 49 kDa subunit family. As to quaternary structure, NDH-1 is composed of 14 different subunits. Subunits NuoB, C, D, E, F, and G constitute the peripheral sector of the complex.

It is found in the cell inner membrane. The enzyme catalyses a quinone + NADH + 5 H(+)(in) = a quinol + NAD(+) + 4 H(+)(out). In terms of biological role, NDH-1 shuttles electrons from NADH, via FMN and iron-sulfur (Fe-S) centers, to quinones in the respiratory chain. The immediate electron acceptor for the enzyme in this species is believed to be ubiquinone. Couples the redox reaction to proton translocation (for every two electrons transferred, four hydrogen ions are translocated across the cytoplasmic membrane), and thus conserves the redox energy in a proton gradient. This chain is NADH-quinone oxidoreductase subunit D, found in Sphingopyxis alaskensis (strain DSM 13593 / LMG 18877 / RB2256) (Sphingomonas alaskensis).